Reading from the N-terminus, the 657-residue chain is Probable Xaa-Pro aminopeptidase P (657 aa).

Mn(2+) is bound by residues Asp-453, Asp-464, Glu-562, and Glu-576.

Belongs to the peptidase M24B family. Requires Mn(2+) as cofactor.

The catalysed reaction is Release of any N-terminal amino acid, including proline, that is linked to proline, even from a dipeptide or tripeptide.. Catalyzes the removal of a penultimate prolyl residue from the N-termini of peptides. The sequence is that of Probable Xaa-Pro aminopeptidase P (ampp) from Talaromyces marneffei (strain ATCC 18224 / CBS 334.59 / QM 7333) (Penicillium marneffei).